The following is a 742-amino-acid chain: Phosphoribosylformylglycinamidine synthase subunit PurL (742 aa).

H54 is an active-site residue. ATP contacts are provided by Y57 and K96. E98 provides a ligand contact to Mg(2+). Substrate contacts are provided by residues 99-102 (SHNH) and R121. The active-site Proton acceptor is the H100. Position 122 (D122) interacts with Mg(2+). Q245 contacts substrate. D273 lines the Mg(2+) pocket. 317–319 (ESQ) provides a ligand contact to substrate. ATP contacts are provided by D500 and G537. N538 serves as a coordination point for Mg(2+). S540 lines the substrate pocket.

This sequence belongs to the FGAMS family. As to quaternary structure, monomer. Part of the FGAM synthase complex composed of 1 PurL, 1 PurQ and 2 PurS subunits.

Its subcellular location is the cytoplasm. The enzyme catalyses N(2)-formyl-N(1)-(5-phospho-beta-D-ribosyl)glycinamide + L-glutamine + ATP + H2O = 2-formamido-N(1)-(5-O-phospho-beta-D-ribosyl)acetamidine + L-glutamate + ADP + phosphate + H(+). It participates in purine metabolism; IMP biosynthesis via de novo pathway; 5-amino-1-(5-phospho-D-ribosyl)imidazole from N(2)-formyl-N(1)-(5-phospho-D-ribosyl)glycinamide: step 1/2. Its function is as follows. Part of the phosphoribosylformylglycinamidine synthase complex involved in the purines biosynthetic pathway. Catalyzes the ATP-dependent conversion of formylglycinamide ribonucleotide (FGAR) and glutamine to yield formylglycinamidine ribonucleotide (FGAM) and glutamate. The FGAM synthase complex is composed of three subunits. PurQ produces an ammonia molecule by converting glutamine to glutamate. PurL transfers the ammonia molecule to FGAR to form FGAM in an ATP-dependent manner. PurS interacts with PurQ and PurL and is thought to assist in the transfer of the ammonia molecule from PurQ to PurL. The protein is Phosphoribosylformylglycinamidine synthase subunit PurL of Geobacillus kaustophilus (strain HTA426).